Reading from the N-terminus, the 346-residue chain is Protein tas (346 aa).

Residue tyrosine 53 is the Proton donor of the active site. An NADP(+)-binding site is contributed by 234–244 (SCLGFGTLTGK).

It belongs to the aldo/keto reductase family. Aldo/keto reductase 2 subfamily.

The protein is Protein tas (tas) of Escherichia coli (strain K12).